A 471-amino-acid chain; its full sequence is Membrane-associated sulfotransferase kil1 (471 aa).

Topologically, residues methionine 1–asparagine 12 are cytoplasmic. Residues isoleucine 13–proline 33 form a helical; Signal-anchor for type II membrane protein membrane-spanning segment. Topologically, residues glutamine 34 to asparagine 471 are lumenal. Asparagine 47 carries N-linked (GlcNAc...) asparagine glycosylation. Low complexity-rich tracts occupy residues asparagine 89–lysine 105 and asparagine 112–asparagine 127. Residues asparagine 89–asparagine 127 form a disordered region. Residues lysine 167–phenylalanine 172, arginine 252, and serine 260 contribute to the 3'-phosphoadenylyl sulfate site. Residues asparagine 324 and asparagine 344 are each glycosylated (N-linked (GlcNAc...) asparagine). A 3'-phosphoadenylyl sulfate-binding site is contributed by tyrosine 348.

This sequence belongs to the sulfotransferase 1 family.

It localises to the membrane. Sulfotransferase involved in intracellular killing of bacteria. This Dictyostelium discoideum (Social amoeba) protein is Membrane-associated sulfotransferase kil1 (kil1).